The sequence spans 118 residues: MTSYTFTRELRLLTPAQFKSVFSNPIKASSAEITLLAIPNSEQHPRLGLTVAKRYVKRANQRNRIKRVIRDSFRLNQHDIPHLDIVVLVRNGVMEMENAEINKLIEKLWRKLSRRYNG.

Belongs to the RnpA family. As to quaternary structure, consists of a catalytic RNA component (M1 or rnpB) and a protein subunit.

It carries out the reaction Endonucleolytic cleavage of RNA, removing 5'-extranucleotides from tRNA precursor.. RNaseP catalyzes the removal of the 5'-leader sequence from pre-tRNA to produce the mature 5'-terminus. It can also cleave other RNA substrates such as 4.5S RNA. The protein component plays an auxiliary but essential role in vivo by binding to the 5'-leader sequence and broadening the substrate specificity of the ribozyme. This chain is Ribonuclease P protein component, found in Shewanella sp. (strain ANA-3).